Reading from the N-terminus, the 355-residue chain is Zinc finger protein CONSTANS-LIKE 1 (355 aa).

8 residues coordinate Zn(2+): Cys-12, Cys-15, Cys-35, His-40, Cys-55, Cys-58, Cys-78, and His-83. Residues 12–54 (CDTCRSAACTVYCRADSAYLCSSCDAQVHAANRLASRHERVRV) form a B box-type 1; atypical zinc finger. The segment at 55–97 (CQSCERAPAAFFCKADAASLCTTCDSEIHSANPLARRHQRVPI) adopts a B box-type 2; atypical zinc-finger fold. A compositionally biased stretch (polar residues) spans 252-264 (ESTTSDATVSNPR). The segment at 252 to 281 (ESTTSDATVSNPRSPKAVTDQPPYPPAQML) is disordered. Residues 286–328 (REARVLRYREKKKMRKFEKTIRYASRKAYAEKRPRIKGRFAKK) enclose the CCT domain.

It belongs to the CONSTANS family. Highly expressed in leaves and at lower levels in stems, flowers and siliques. Not detected in roots.

Its subcellular location is the nucleus. Its function is as follows. Putative transcription factor that may be involved in the light input to the circadian clock but does not affect flowering time. This Arabidopsis thaliana (Mouse-ear cress) protein is Zinc finger protein CONSTANS-LIKE 1 (COL1).